A 144-amino-acid chain; its full sequence is Large ribosomal subunit protein uL15 (144 aa).

Residues 1–58 form a disordered region; sequence MNLSNLRAPRKANEKKKRVGRGMGSGMGKTSARGHKGQRSRSGSRMMRGFEGGQMPLH. Positions 8 to 20 are enriched in basic residues; that stretch reads APRKANEKKKRVG. The segment covering 40–49 has biased composition (low complexity); the sequence is SRSGSRMMRG.

This sequence belongs to the universal ribosomal protein uL15 family. In terms of assembly, part of the 50S ribosomal subunit.

Functionally, binds to the 23S rRNA. This chain is Large ribosomal subunit protein uL15, found in Koribacter versatilis (strain Ellin345).